Here is a 355-residue protein sequence, read N- to C-terminus: F-box protein At1g31080 (355 aa).

The region spanning 4 to 49 is the F-box domain; it reads GANSASIPNDLILEILSRLPAKSTGRFRCVSKLWGSMLCHSYFTEL. Residues 306 to 320 show a composition bias toward polar residues; sequence AGTSRSPPKQSTSTS. The disordered stretch occupies residues 306–333; the sequence is AGTSRSPPKQSTSTSSREDHEVRTLAHQ. A compositionally biased stretch (basic and acidic residues) spans 321 to 333; it reads SREDHEVRTLAHQ.

In Arabidopsis thaliana (Mouse-ear cress), this protein is F-box protein At1g31080.